Here is a 310-residue protein sequence, read N- to C-terminus: Ribosomal RNA small subunit methyltransferase H (310 aa).

S-adenosyl-L-methionine-binding positions include 32–34, Asp-52, Ala-83, Asp-100, and Gln-107; that span reads GGH.

The protein belongs to the methyltransferase superfamily. RsmH family.

The protein localises to the cytoplasm. The catalysed reaction is cytidine(1402) in 16S rRNA + S-adenosyl-L-methionine = N(4)-methylcytidine(1402) in 16S rRNA + S-adenosyl-L-homocysteine + H(+). Its function is as follows. Specifically methylates the N4 position of cytidine in position 1402 (C1402) of 16S rRNA. In Geobacillus sp. (strain WCH70), this protein is Ribosomal RNA small subunit methyltransferase H.